The chain runs to 263 residues: MAKMRISPELKKLIEKYRCVKDTEGMSPAKVYKLGENENLYLKMTDSRYKGTTYDVEREKDMMLWLEGKLPVPKVVHFERHDGWSNLLMSEADGVLCSEEYEDEQSPEKIIELYAECIRLFHSIDISDCPYTNSLDSRLAELDYLLNNDLADVDCENWEEDTPFKDPRELYDFLKTEKPEEELVFSHGDLGDSKIFVKDGKVSGFIDLGRSGRADKWYDIPFCVRSIREDIGEEQYVELFFDLLGIKPDWEKIKYYILLDELF.

The active-site Proton acceptor is the D189.

Belongs to the aminoglycoside phosphotransferase family.

The enzyme catalyses kanamycin A + ATP = kanamycin 3'-phosphate + ADP + H(+). Functionally, resistance to kanamycin and structurally-related aminoglycosides, including amikacin. This chain is Aminoglycoside 3'-phosphotransferase (aphA), found in Staphylococcus aureus.